Consider the following 304-residue polypeptide: Glutaminase (304 aa).

The substrate site is built by S63, N114, E158, N165, Y189, Y240, and V258.

Belongs to the glutaminase family. In terms of assembly, homotetramer.

The catalysed reaction is L-glutamine + H2O = L-glutamate + NH4(+). This chain is Glutaminase, found in Shewanella loihica (strain ATCC BAA-1088 / PV-4).